The chain runs to 941 residues: PHD finger protein 14 (941 aa).

The interval 22-295 is disordered; that stretch reads DYDSSDDSDF…LSQSKSNEDS (274 aa). Serine 26 and serine 29 each carry phosphoserine. Over residues 36–47 the composition is skewed to low complexity; the sequence is ASDSEGSGNGSE. The span at 60–72 shows a compositional bias: acidic residues; it reads DSEENILEEELNE. Composition is skewed to basic and acidic residues over residues 74-85, 94-109, and 116-132; these read IQVKEEQLKNST, QLIK…NGER, and KEKE…EKAT. Serine 84 carries the post-translational modification Phosphoserine. Residues 133–166 show a composition bias toward low complexity; that stretch reads VSDSAAASAAGTTPATSPPAVTSPSVPTTTTTTT. Serine 189 is subject to Phosphoserine. 2 stretches are compositionally biased toward acidic residues: residues 194 to 205 and 226 to 249; these read NAMDDYDSEDDN and DGDN…EGND. Tyrosine 199 bears the Phosphotyrosine mark. Serine 201 is subject to Phosphoserine. Threonine 280 bears the Phosphothreonine mark. The segment covering 281–290 has biased composition (polar residues); that stretch reads NDSLTLSQSK. Serine 283, serine 287, serine 291, serine 295, and serine 301 each carry phosphoserine. The segment at 312–373 adopts a PHD-type 1 zinc-finger fold; it reads ILICCVCLGD…PWFCDACKCG (62 aa). Positions 315, 318, 332, 335, 340, and 343 each coordinate Zn(2+). At serine 352 the chain carries Phosphoserine. Zn(2+) contacts are provided by cysteine 367, cysteine 370, cysteine 378, cysteine 381, histidine 398, cysteine 401, cysteine 434, cysteine 437, cysteine 451, cysteine 456, histidine 461, cysteine 464, cysteine 488, and histidine 491. Residues 375–408 form a C2HC pre-PHD-type zinc finger; the sequence is SPSCELCPNQDGIFKETDAGRWVHIVCALYVPGV. Residues 432 to 492 form a PHD-type 2 zinc finger; it reads KECSFCEDPR…PFFAYCKQHA (61 aa). A Phosphoserine modification is found at serine 523. Positions 623-671 form a coiled coil; that stretch reads MIQIQENMAEQKNIKDKLENEQEKLHVEYNKLCESLEELQNLNGKLRSE. The PHD-type 3 zinc finger occupies 718-772; the sequence is LYSCGICKKNHDQHLLLLCDTCKLHYHLGCLDPPLTRMPRKTKNSYWQCSECDQA. Zn(2+) is bound by residues cysteine 721, cysteine 724, cysteine 736, cysteine 739, histidine 744, cysteine 747, cysteine 766, and cysteine 769. 3 positions are modified to phosphoserine: serine 774, serine 775, and serine 828. Residues 804 to 855 are disordered; it reads VPQDVPPEPKKIPIRNTRTRGRKRSFVPEEEKHEERVPRERRQRQSVLQKKP. Basic and acidic residues predominate over residues 829 to 843; the sequence is FVPEEEKHEERVPRE. The PHD-type 4 zinc finger occupies 861 to 914; the sequence is RTECSTCKGTGDNENLVRCDECRLCYHFGCLDPPLKKSPKQTGYGWICQECDSS. Positions 864, 867, 879, 882, 887, 890, 908, and 911 each coordinate Zn(2+). Residues 912–941 form a disordered region; it reads DSSSSKEDENEAEKKNASQELSMEQKTPKK. The segment covering 915-928 has biased composition (basic and acidic residues); the sequence is SSKEDENEAEKKNA. Residues 930–941 are compositionally biased toward polar residues; sequence QELSMEQKTPKK.

As to expression, high levels detected in testis, lung and spleen and low levels in muscle, heart, intestine and kidney (at protein level). Widely expressed in adult with increased levels in intestine, colon and lung.

Its subcellular location is the nucleus. It localises to the chromosome. The protein resides in the cytoplasm. Histone-binding protein. Binds preferentially to unmodified histone H3 but can also bind to a lesser extent to histone H3 trimethylated at 'Lys-9' (H3K9me3) as well as to histone H3 monomethylated at 'Lys-27' (H3K27ac) and trimethylated at 'Lys-27' (H3K27me3). Represses PDGFRA expression, thus playing a role in regulation of mesenchymal cell proliferation. Suppresses the expression of CDKN1A/p21 by reducing the level of trimethylation of histone H3 'Lys-4', leading to enhanced proliferation of germinal center B cells. This chain is PHD finger protein 14 (Phf14), found in Mus musculus (Mouse).